Consider the following 257-residue polypeptide: 5'-nucleotidase SurE (257 aa).

Residues Asp-15, Asp-16, Ser-46, and Asn-99 each contribute to the a divalent metal cation site.

The protein belongs to the SurE nucleotidase family. A divalent metal cation is required as a cofactor.

It is found in the cytoplasm. The catalysed reaction is a ribonucleoside 5'-phosphate + H2O = a ribonucleoside + phosphate. Its function is as follows. Nucleotidase that shows phosphatase activity on nucleoside 5'-monophosphates. In Aliivibrio fischeri (strain ATCC 700601 / ES114) (Vibrio fischeri), this protein is 5'-nucleotidase SurE.